A 478-amino-acid polypeptide reads, in one-letter code: Septin-4 (478 aa).

Disordered regions lie at residues 40-74 and 87-115; these read DFSG…LYDD and ADNQ…LDPY. Positions 95–108 are enriched in low complexity; sequence APAPLSPSARPRSP. Residues Ser-117 and Ser-118 each carry the phosphoserine modification. Positions 141–414 constitute a Septin-type G domain; that stretch reads KGFDFTLMVA…ENYRAQCIQS (274 aa). The tract at residues 151–158 is G1 motif; that stretch reads GESGLGKS. Residues 151–158 and Thr-185 each bind GTP; that span reads GESGLGKS. The tract at residues 208 to 211 is G3 motif; that stretch reads DTPG. The tract at residues 289–292 is G4 motif; the sequence is AKAD. 290–298 is a binding site for GTP; the sequence is KADTLTPPE. A Phosphoserine modification is found at Ser-325. GTP contacts are provided by Gly-348 and Arg-363. The disordered stretch occupies residues 428-448; sequence LTRESGTDFPIPAVPPGTDPE. Residue Ser-432 is modified to Phosphoserine. Thr-434 carries the phosphothreonine modification. Positions 446-478 form a coiled coil; that stretch reads DPETEKLIREKDEELRRMQEILHKIQKQMKETY.

It belongs to the TRAFAC class TrmE-Era-EngA-EngB-Septin-like GTPase superfamily. Septin GTPase family. As to quaternary structure, septins polymerize into heterooligomeric protein complexes that form filaments, and can associate with cellular membranes, actin filaments and microtubules. GTPase activity is required for filament formation. Interacts with SEPTIN8. Component of a septin core octameric complex consisting of SEPTIN12, SEPTIN7, SEPTIN6 and SEPTIN2 or SEPTIN4 in the order 12-7-6-2-2-6-7-12 or 12-7-6-4-4-6-7-12. Interacts with SEPTIN14 (via C-terminus). Interacts with DYRK1A. Interacts with SLC6A3/DAT and SNCA/alpha-synuclein. Interacts with STX1A; in the striatum. Interacts with XIAP (via BIR3 domain) following the induction of apoptosis. Interacts with AREL1 (via HECT domain); in the cytoplasm following induction of apoptosis. In terms of processing, ubiquitinated by AREL1. Phosphorylated by DYRK1A.

The protein localises to the cytoplasm. It is found in the cell projection. Its subcellular location is the cilium. The protein resides in the flagellum. It localises to the cytoplasmic vesicle. The protein localises to the secretory vesicle. It is found in the axon. Its subcellular location is the dendrite. The protein resides in the perikaryon. It localises to the synapse. Its function is as follows. Filament-forming cytoskeletal GTPase. Pro-apoptotic protein involved in LGR5-positive intestinal stem cell and Paneth cell expansion in the intestines, via its interaction with XIAP. May also play a role in the regulation of cell fate in the intestine. Positive regulator of apoptosis involved in hematopoietic stem cell homeostasis; via its interaction with XIAP. Negative regulator of repair and hair follicle regeneration in response to injury, due to inhibition of hair follicle stem cell proliferation, potentially via its interaction with XIAP. Plays an important role in male fertility and sperm motility. During spermiogenesis, essential for the establishment of the annulus (a fibrous ring structure connecting the midpiece and the principal piece of the sperm flagellum) which is a requisite for the structural and mechanical integrity of the sperm. Involved in the migration of cortical neurons and the formation of neuron leading processes during embryonic development. Required for dopaminergic metabolism in presynaptic autoreceptors; potentially via activity as a presynaptic scaffold protein. The chain is Septin-4 from Macaca fascicularis (Crab-eating macaque).